Reading from the N-terminus, the 121-residue chain is uncharacterized protein (121 aa).

Disordered regions lie at residues 1–28 (MGCA…QNGD) and 60–81 (QENL…EIPG). A phosphoserine mark is found at S95 and S115.

This is an uncharacterized protein from Mus musculus (Mouse).